A 137-amino-acid chain; its full sequence is Large ribosomal subunit protein uL16 (137 aa).

Belongs to the universal ribosomal protein uL16 family. Part of the 50S ribosomal subunit.

Functionally, binds 23S rRNA and is also seen to make contacts with the A and possibly P site tRNAs. The protein is Large ribosomal subunit protein uL16 of Mesorhizobium japonicum (strain LMG 29417 / CECT 9101 / MAFF 303099) (Mesorhizobium loti (strain MAFF 303099)).